The primary structure comprises 333 residues: uncharacterized protein (333 aa).

This sequence to E.coli YfeH.

This is an uncharacterized protein from Pseudomonas aeruginosa (strain ATCC 15692 / DSM 22644 / CIP 104116 / JCM 14847 / LMG 12228 / 1C / PRS 101 / PAO1).